We begin with the raw amino-acid sequence, 769 residues long: MGRVGAGGTAREAATGSLLLLLLLLARPPPAAASNSKESEAGLVSEHFSQAPQKLSFYSWYGSTRLFHFRVPPDTVLLRWLLHVSQGSPSCTDEEITVHFRYGAPPVINPLGTSFPDNTLSHASFHIRALLSTLMLDNTSVNISHPAPGDWFLVAHLPPSSQKIQVKGFVPTCAYIFQPDMLVMRVVEVSTLEPDVPLPQTLLSYPSYLKIFVPEYTQELRLELQGCVSSVSPGCPVRVTVGATTLPRNFQRVLTCTGLAPSCHLLLSSPPWGRWLQVTFESLAEPHVTVGFTAKAVFTVCRPWSVTIHHLIQNNPNQTYDTSAIQLSQSAVHRDLGRSSRVDSGPFCLLNYPVLREDTDVVSVHFQPLNGAFVLVHSSMPSVMQLRLDTGMDSGGSFIIVLRTNKTEVTNGTLVAACVNAASPFLSFNTSLNCTTAFFQGYPMFLRASSHMANLIMPFPETDNWYLSLQLVCPESPEDCEQAVVRVETILYLVPCLNDCGPYGQCLLLRRYGYVYAGCSCKAGWRGWSCTDNSTAQTVAQQRAAALLLTLSNLMFLAPIAISLHRSFLVEASVYFYTMFFSTFYHACDQPGEAVLCILSYDTLQYCDFLGSGASTWVTILCMARLKTILKQVLLVLGTLVIAMSLQMDRRGIWNLMGPCVFAFVIMASMWIYRCGHRGQCYPTSWQRWVFYLLPGISMASVGIAMYTSMMTSDNYYYTHSIWHILLAGSAAFLLPPREEKAGSWACLQKFPCHYQICRNDRDELYTVT.

An N-terminal signal peptide occupies residues 1–33 (MGRVGAGGTAREAATGSLLLLLLLLARPPPAAA). Residues 34–543 (SNSKESEAGL…STAQTVAQQR (510 aa)) lie on the Extracellular side of the membrane. N-linked (GlcNAc...) asparagine glycans are attached at residues N138 and N411. In terms of domain architecture, EGF-like spans 495-531 (PCLNDCGPYGQCLLLRRYGYVYAGCSCKAGWRGWSCT). 3 disulfides stabilise this stretch: C496–C506, C500–C519, and C521–C530. Residues 544–564 (AAALLLTLSNLMFLAPIAISL) form a helical membrane-spanning segment. At 565 to 567 (HRS) the chain is on the cytoplasmic side. Residues 568-588 (FLVEASVYFYTMFFSTFYHAC) traverse the membrane as a helical segment. Topologically, residues 589-603 (DQPGEAVLCILSYDT) are extracellular. Residues 604–624 (LQYCDFLGSGASTWVTILCMA) form a helical membrane-spanning segment. Residues 625-627 (RLK) are Cytoplasmic-facing. The helical transmembrane segment at 628–648 (TILKQVLLVLGTLVIAMSLQM) threads the bilayer. Residues 649–651 (DRR) lie on the Extracellular side of the membrane. The chain crosses the membrane as a helical span at residues 652–672 (GIWNLMGPCVFAFVIMASMWI). At 673–688 (YRCGHRGQCYPTSWQR) the chain is on the cytoplasmic side. The chain crosses the membrane as a helical span at residues 689 to 709 (WVFYLLPGISMASVGIAMYTS). At 710–715 (MMTSDN) the chain is on the extracellular side. Residues 716-736 (YYYTHSIWHILLAGSAAFLLP) traverse the membrane as a helical segment. Topologically, residues 737–769 (PREEKAGSWACLQKFPCHYQICRNDRDELYTVT) are cytoplasmic.

Belongs to the TMEM8 family. Glycosylated.

It is found in the cell membrane. It localises to the lysosome membrane. The catalysed reaction is a 1,2-diacyl-sn-glycero-3-phosphocholine + H2O = a 1-acyl-sn-glycero-3-phosphocholine + a fatty acid + H(+). Its function is as follows. Involved in the lipid remodeling steps of GPI-anchor maturation. Lipid remodeling steps consist in the generation of 2 saturated fatty chains at the sn-2 position of GPI-anchor proteins (GPI-AP). Has phospholipase A2 activity that removes an acyl-chain at the sn-2 position of GPI-anchors during the remodeling of GPI. Required for the shedding of the GPI-AP CRIPTO, but not CFC1, at the cell surface. Shedding of CRIPTO modulates Nodal signaling by allowing soluble CRIPTO to act as a Nodal coreceptor on other cells. Also indirectly involved in the translocation of RAC1 from the cytosol to the plasma membrane by maintaining the steady state amount of CAV1-enriched plasma membrane subdomains, stabilizing RAC1 at the plasma membrane. The chain is Post-GPI attachment to proteins factor 6 from Mus musculus (Mouse).